The primary structure comprises 167 residues: Pathogenesis-related protein PR-1 type (167 aa).

The signal sequence occupies residues Met1 to Gln29. One can recognise an SCP domain in the interval Val36–Tyr155. Intrachain disulfides connect Cys72-Cys144, Cys117-Cys123, and Cys139-Cys153.

The protein belongs to the CRISP family.

Functionally, probably involved in the defense reaction of plants against pathogens. The sequence is that of Pathogenesis-related protein PR-1 type from Sambucus nigra (European elder).